We begin with the raw amino-acid sequence, 803 residues long: Sensor histidine kinase CheAY (803 aa).

H47 is modified (phosphohistidine). 2 disordered regions span residues 134–185 (LESA…DEPD) and 209–255 (EADK…ENKA). Composition is skewed to basic and acidic residues over residues 136 to 166 (SAKE…ENKA), 209 to 226 (EADK…KPKQ), and 233 to 254 (ETPK…EENK). The Histidine kinase domain occupies 270 to 517 (RLDHLMNLIG…TQKLKIPLTL (248 aa)). H273 is subject to Phosphohistidine; by autocatalysis. The CheW-like domain occupies 519-653 (IIQALLVGVQ…VGAMMDMAKS (135 aa)). The region spanning 678-796 (IVLAIDDSST…YLTTVVKRSI (119 aa)) is the Response regulatory domain. Position 729 is a 4-aspartylphosphate (D729).

In terms of processing, autophosphorylated.

It carries out the reaction ATP + protein L-histidine = ADP + protein N-phospho-L-histidine.. In terms of biological role, member of the two-component regulatory system CheAY/CheY that regulates chemotaxis and colonization of the gastric mucosa. Functions as a sensor protein kinase which is autophosphorylated at a histidine residue and transfers its phosphate group to the conserved aspartic acid residue in the regulatory domain of CheY. In turn, phosphorylated CheY (CheY-P) interacts with the flagellar motor protein FliM to cause clockwise flagellar rotation and bacterial reversals, as opposed to straight swimming when CheY is not phosphorylated. This is Sensor histidine kinase CheAY (cheAY) from Helicobacter pylori (strain ATCC 700392 / 26695) (Campylobacter pylori).